The following is a 536-amino-acid chain: Enterobactin synthase component E (536 aa).

7 residues coordinate substrate: asparagine 235, serine 240, glycine 309, valine 331, alanine 335, aspartate 415, and lysine 432. Residues 438–439 (GG) form a phosphopantetheine binding region. Lysine 441 provides a ligand contact to substrate.

It belongs to the ATP-dependent AMP-binding enzyme family. EntE subfamily. As to quaternary structure, proteins EntB, EntD, EntE, and EntF form a multienzyme complex called enterobactin synthase. Monomer. EntA and EntE interact together.

Its subcellular location is the membrane. It catalyses the reaction 3 2,3-dihydroxybenzoate + 3 L-serine + 6 ATP = enterobactin + 6 AMP + 6 diphosphate + 4 H(+). It carries out the reaction 2,3-dihydroxybenzoate + holo-[ACP] + ATP = 2,3-dihydroxybenzoyl-[ACP] + AMP + diphosphate. The enzyme catalyses 2,3-dihydroxybenzoyl-5'-AMP + holo-[ACP] = 2,3-dihydroxybenzoyl-[ACP] + AMP + H(+). It functions in the pathway siderophore biosynthesis; enterobactin biosynthesis. Its activity is regulated as follows. Inhibited by the adenylate analogs, 5'-O-[N-(salicyl)sulfamoyl]adenosine (Sal-AMS) and 5'-O-[N-(2,3-dihydroxybenzoyl)sulfamoyl]adenosine (DHB-AMS). Adenylation of 2,3-dihydroxybenzoate (DHB) is enhanced by a protein-protein interaction between the EntA and EntE. In terms of biological role, involved in the biosynthesis of the siderophore enterobactin (enterochelin), which is a macrocyclic trimeric lactone of N-(2,3-dihydroxybenzoyl)-serine. The serine trilactone serves as a scaffolding for the three catechol functionalities that provide hexadentate coordination for the tightly ligated iron(2+) atoms. EntE processes via a two-step adenylation-ligation reaction (bi-uni-uni-bi ping-pong mechanism). First, it catalyzes the activation of the carboxylate group of 2,3-dihydroxy-benzoate (DHB), via a reversible ATP-dependent pyrophosphate exchange reactions to yield the acyladenylate intermediate 2,3-dihydroxybenzoyl-AMP. It can also transfer AMP to salicylate, 2,4-dihydroxybenzoate, gentisate and 2,3,4-trihydroxybenzoate. In the second step, DHB is transferred from 2,3-dihydroxybenzoyl-AMP onto the phosphopantetheinylated EntB (holo-EntB) to form DHB-holo-EntB. Then this product will serve in the formation of the amide bond between 2,3-dihydroxybenzoate (DHB) and L-serine. It can also transfer adenylated salicylate to holo-EntB. This chain is Enterobactin synthase component E, found in Escherichia coli (strain K12).